The sequence spans 431 residues: Histidinol dehydrogenase (431 aa).

The NAD(+) site is built by tyrosine 124, glutamine 187, and asparagine 210. 3 residues coordinate substrate: serine 236, glutamine 258, and histidine 261. Residues glutamine 258 and histidine 261 each coordinate Zn(2+). Active-site proton acceptor residues include glutamate 325 and histidine 326. Residues histidine 326, aspartate 359, glutamate 413, and histidine 418 each contribute to the substrate site. Position 359 (aspartate 359) interacts with Zn(2+). Histidine 418 provides a ligand contact to Zn(2+).

Belongs to the histidinol dehydrogenase family. Requires Zn(2+) as cofactor.

The catalysed reaction is L-histidinol + 2 NAD(+) + H2O = L-histidine + 2 NADH + 3 H(+). It participates in amino-acid biosynthesis; L-histidine biosynthesis; L-histidine from 5-phospho-alpha-D-ribose 1-diphosphate: step 9/9. Catalyzes the sequential NAD-dependent oxidations of L-histidinol to L-histidinaldehyde and then to L-histidine. This chain is Histidinol dehydrogenase, found in Legionella pneumophila (strain Lens).